The chain runs to 289 residues: Tachykinins (289 aa).

The N-terminal stretch at 1-24 (MRPLSGLIALALLLLLLLTAPSSA) is a signal peptide. A disordered region spans residues 24–94 (AADTETESSG…DEEADSSYAE (71 aa)). Residues 25–47 (ADTETESSGSPLTPGAEEPRRVV) constitute a propeptide that is removed on maturation. At R59 the chain carries Arginine amide. Basic and acidic residues predominate over residues 60-69 (GKKDEEHDTS). The residue at position 95 (N95) is an Asparagine amide. Arginine amide is present on R110. The residue at position 153 (V153) is a Valine amide. Arginine amide is present on residues R165, R200, R239, and R281. Positions 285–289 (PALFE) are excised as a propeptide.

This sequence belongs to the tachykinin family. In terms of tissue distribution, strong expression is seen in a group of 14 cells plus one isolated cell in the midgut of stage 17 embryos. Also expressed in a pair of medially located unidentified cells, just posterior to the brain, and in two lateral groups of cells that may be associated with tracheae. Expression in the larval gut is restricted to cells with endocrine cell-like morphology in the posterior midgut, just anterior to the malphigian tubules. In the brain, expression is detected in a restricted number of neuronal cell bodies. Expression in the adult female gut is restricted to the midgut with no expression detected in the hindgut.

Its subcellular location is the secreted. In terms of biological role, tachykinins are active peptides which excite neurons, evoke behavioral responses, are potent vasodilators and secretagogues, and contract (directly or indirectly) many smooth muscles. Stimulates gut muscle contractions. Required for the response to the male sex pheromone CH503 which is transferred from males to females during mating and inhibits courtship behavior by other males. The Gr68a gustatory receptor is required for detection of the pheromone and Gr68a-expressing neurons in the male foreleg relay signals to the suboesophageal zone (SEZ) which leads to courtship suppression through release of tachykinin from a cluster of 8-10 neurons in the SEZ. This Drosophila melanogaster (Fruit fly) protein is Tachykinins.